Here is a 278-residue protein sequence, read N- to C-terminus: MNSGPKVSVIMGIYNCERTLAESIESILSQSYKNWELILCDDASTDGTLRIAKQYAAHYSDRIKLIQNKTNKRLAASLNHCLSHATGDYIARQDGDDLSFPRRLEKQVAFLEKHRHYQVVGTGMLVFDEFGVRGARILPSVPEPGIMAKGTPFCHGTIMMRASAYRTLKGYRSVRRTRRMEDIDLWLRFFEEGFRGYNLQEALYKVREDSDAFKRRSFTYSIDNAILVYQACRRLKLPLSDYIYIAKPLIRAFMPAAVMNRYHKKRVMNQKEGLVKHE.

The protein belongs to the glycosyltransferase 2 family.

May be involved in the production of the exopolysaccharide (EPS) component of the extracellular matrix during biofilm formation. EPS is responsible for the adhesion of chains of cells into bundles. Required for biofilm maintenance. The sequence is that of Putative glycosyltransferase EpsE (epsE) from Bacillus subtilis (strain 168).